A 264-amino-acid chain; its full sequence is Thymidylate synthase (264 aa).

R21 is a dUMP binding site. Residue H51 participates in (6R)-5,10-methylene-5,6,7,8-tetrahydrofolate binding. R126–R127 is a binding site for dUMP. C146 functions as the Nucleophile in the catalytic mechanism. Residues R166–D169, N177, and H207–Y209 each bind dUMP. D169 contacts (6R)-5,10-methylene-5,6,7,8-tetrahydrofolate. A263 provides a ligand contact to (6R)-5,10-methylene-5,6,7,8-tetrahydrofolate.

It belongs to the thymidylate synthase family. Bacterial-type ThyA subfamily. Homodimer.

It localises to the cytoplasm. It catalyses the reaction dUMP + (6R)-5,10-methylene-5,6,7,8-tetrahydrofolate = 7,8-dihydrofolate + dTMP. Its pathway is pyrimidine metabolism; dTTP biosynthesis. Its function is as follows. Catalyzes the reductive methylation of 2'-deoxyuridine-5'-monophosphate (dUMP) to 2'-deoxythymidine-5'-monophosphate (dTMP) while utilizing 5,10-methylenetetrahydrofolate (mTHF) as the methyl donor and reductant in the reaction, yielding dihydrofolate (DHF) as a by-product. This enzymatic reaction provides an intracellular de novo source of dTMP, an essential precursor for DNA biosynthesis. The chain is Thymidylate synthase from Salmonella typhi.